Reading from the N-terminus, the 267-residue chain is Cyclin-C (267 aa).

One can recognise a Cyclin N-terminal domain in the interval 48 to 151 (IQVLGEQLKL…LLENLDCCLI (104 aa)).

Belongs to the cyclin family. Cyclin C subfamily. In terms of assembly, component of the Cdk8 module of the Mediator complex, composed of CycC, Cdk8, kto and skd.

The protein resides in the nucleus. In terms of biological role, component of the Mediator complex, a coactivator involved in regulated gene transcription of nearly all RNA polymerase II-dependent genes. Mediator functions as a bridge to convey information from gene-specific regulatory proteins to the basal RNA polymerase II transcription machinery. Mediator is recruited to promoters by direct interactions with regulatory proteins and serves as a scaffold for the assembly of a functional preinitiation complex with RNA polymerase II and the general transcription factors. Binds to and activates cyclin-dependent kinase Cdk8 that phosphorylates the CTD (C-terminal domain) of the large subunit of RNA polymerase II (RNAp II), which may inhibit the formation of a transcription initiation complex. Required for leg and eye development and macrochaete specification or differentiation. The polypeptide is Cyclin-C (CycC) (Drosophila melanogaster (Fruit fly)).